We begin with the raw amino-acid sequence, 573 residues long: 2-succinyl-5-enolpyruvyl-6-hydroxy-3-cyclohexene-1-carboxylate synthase (573 aa).

The protein belongs to the TPP enzyme family. MenD subfamily. Homodimer. The cofactor is Mg(2+). It depends on Mn(2+) as a cofactor. Requires thiamine diphosphate as cofactor.

It carries out the reaction isochorismate + 2-oxoglutarate + H(+) = 5-enolpyruvoyl-6-hydroxy-2-succinyl-cyclohex-3-ene-1-carboxylate + CO2. It functions in the pathway quinol/quinone metabolism; 1,4-dihydroxy-2-naphthoate biosynthesis; 1,4-dihydroxy-2-naphthoate from chorismate: step 2/7. The protein operates within quinol/quinone metabolism; menaquinone biosynthesis. Catalyzes the thiamine diphosphate-dependent decarboxylation of 2-oxoglutarate and the subsequent addition of the resulting succinic semialdehyde-thiamine pyrophosphate anion to isochorismate to yield 2-succinyl-5-enolpyruvyl-6-hydroxy-3-cyclohexene-1-carboxylate (SEPHCHC). The sequence is that of 2-succinyl-5-enolpyruvyl-6-hydroxy-3-cyclohexene-1-carboxylate synthase from Shewanella sp. (strain W3-18-1).